The sequence spans 355 residues: Methionine import ATP-binding protein MetN 1 (355 aa).

The ABC transporter domain occupies 6–245 (IDLKDIAVTF…PKAPLTVDFV (240 aa)). An ATP-binding site is contributed by 42–49 (GYSGAGKS).

It belongs to the ABC transporter superfamily. Methionine importer (TC 3.A.1.24) family. The complex is composed of two ATP-binding proteins (MetN), two transmembrane proteins (MetI) and a solute-binding protein (MetQ).

The protein resides in the cell membrane. The catalysed reaction is L-methionine(out) + ATP + H2O = L-methionine(in) + ADP + phosphate + H(+). It catalyses the reaction D-methionine(out) + ATP + H2O = D-methionine(in) + ADP + phosphate + H(+). Functionally, part of the ABC transporter complex MetNIQ involved in methionine import. Responsible for energy coupling to the transport system. The protein is Methionine import ATP-binding protein MetN 1 of Lactiplantibacillus plantarum (strain ATCC BAA-793 / NCIMB 8826 / WCFS1) (Lactobacillus plantarum).